Consider the following 89-residue polypeptide: Small ribosomal subunit protein uS15 (89 aa).

The protein belongs to the universal ribosomal protein uS15 family. As to quaternary structure, part of the 30S ribosomal subunit. Forms a bridge to the 50S subunit in the 70S ribosome, contacting the 23S rRNA.

In terms of biological role, one of the primary rRNA binding proteins, it binds directly to 16S rRNA where it helps nucleate assembly of the platform of the 30S subunit by binding and bridging several RNA helices of the 16S rRNA. Forms an intersubunit bridge (bridge B4) with the 23S rRNA of the 50S subunit in the ribosome. This chain is Small ribosomal subunit protein uS15, found in Blochmanniella pennsylvanica (strain BPEN).